Reading from the N-terminus, the 371-residue chain is MSDNSQKKVIVGMSGGVDSSVSAYLLQQQGYQVAGLFMKNWEEDDDEEYCSAATDLADAQAVCDKLGMELHTVNFAAEYWDNVFELFLAEYKAGRTPNPDILCNKEIKFKAFLEFAAEDLGADYIATGHYVRRQDVDGKSRLLRGLDGNKDQSYFLYTLSHEQIAQSLFPVGELEKPEVRRIAEQLDLVTAKKKDSTGICFIGERKFRDFLGRYLPAQPGPIMTVDGQLVGKHQGLMYHTLGQRKGLGIGGTKEGGDDPWYVVDKDLDSNTLLVAQGHEHPRLMSVGLVAQQLHWVDRQPVTAPFRCVVKTRYRQQDIPCTVTPLDDERVDVRFDDPVAAVTPGQSAVFYQGEICLGGGIIEQRYPLTNPA.

ATP contacts are provided by residues 12–19 (GMSGGVDS) and Met38. Positions 98 to 100 (NPD) are interaction with target base in tRNA. Cys103 acts as the Nucleophile in catalysis. Cys103 and Cys200 are disulfide-bonded. Gly128 contributes to the ATP binding site. The interval 150 to 152 (KDQ) is interaction with tRNA. The Cysteine persulfide intermediate role is filled by Cys200. An interaction with tRNA region spans residues 312-313 (RY).

It belongs to the MnmA/TRMU family. As to quaternary structure, interacts with TusE.

Its subcellular location is the cytoplasm. It catalyses the reaction S-sulfanyl-L-cysteinyl-[protein] + uridine(34) in tRNA + AH2 + ATP = 2-thiouridine(34) in tRNA + L-cysteinyl-[protein] + A + AMP + diphosphate + H(+). In terms of biological role, catalyzes the 2-thiolation of uridine at the wobble position (U34) of tRNA(Lys), tRNA(Glu) and tRNA(Gln), leading to the formation of s(2)U34, the first step of tRNA-mnm(5)s(2)U34 synthesis. Sulfur is provided by IscS, via a sulfur-relay system. Binds ATP and its substrate tRNAs. This chain is tRNA-specific 2-thiouridylase MnmA, found in Yersinia pestis bv. Antiqua (strain Antiqua).